The chain runs to 276 residues: MFVPFLIMLREGLEAALIVSLIASYLKRTQRGRWIGVMWIGVLLAAALCLGLGIFINETTGEFPQKEQELFEGIVAVIAVVILTWMVFWMRKVSRNVKVQLEQAVDSALQRGNHHGWALVMMVFFAVAREGLESVFFLLAAFQQDVGIWPPLGAMLGLATAVVLGFLLYWGGIRLNLGAFFKWTSLFILFVAAGLAAGAIRAFHEAGLWNHFQEIAFDMSAVLSTHSLFGTLMEGIFGYQEAPSVSEVAVWFIYLIPALVAFALPPRAGATASRSA.

A topological domain (periplasmic) is located at residue Met1. A helical membrane pass occupies residues 2 to 22 (FVPFLIMLREGLEAALIVSLI). Over 23-34 (ASYLKRTQRGRW) the chain is Cytoplasmic. A helical transmembrane segment spans residues 35-55 (IGVMWIGVLLAAALCLGLGIF). Residues 56–69 (INETTGEFPQKEQE) are Periplasmic-facing. The helical transmembrane segment at 70-90 (LFEGIVAVIAVVILTWMVFWM) threads the bilayer. At 91–118 (RKVSRNVKVQLEQAVDSALQRGNHHGWA) the chain is on the cytoplasmic side. A helical transmembrane segment spans residues 119 to 139 (LVMMVFFAVAREGLESVFFLL). Over 140–147 (AAFQQDVG) the chain is Periplasmic. Residues 148–168 (IWPPLGAMLGLATAVVLGFLL) form a helical membrane-spanning segment. Residues 169 to 179 (YWGGIRLNLGA) lie on the Cytoplasmic side of the membrane. The chain crosses the membrane as a helical span at residues 180–200 (FFKWTSLFILFVAAGLAAGAI). The Periplasmic portion of the chain corresponds to 201-244 (RAFHEAGLWNHFQEIAFDMSAVLSTHSLFGTLMEGIFGYQEAPS). A helical transmembrane segment spans residues 245-265 (VSEVAVWFIYLIPALVAFALP). At 266-276 (PRAGATASRSA) the chain is on the cytoplasmic side.

Belongs to the oxidase-dependent Fe transporter (OFeT) (TC 9.A.10.1) family. In terms of assembly, part of a ferrous iron transporter composed of EfeU, EfeO and EfeB.

The protein localises to the cell inner membrane. Uptake of Fe(2+) ions across the membrane. The sequence is that of Ferrous iron permease EfeU (efeU) from Escherichia coli O157:H7.